Here is a 130-residue protein sequence, read N- to C-terminus: Small ribosomal subunit protein uS9 (130 aa).

The segment at 111 to 130 (KERRKYGLKKARKAPQFSKR) is disordered.

The protein belongs to the universal ribosomal protein uS9 family.

The chain is Small ribosomal subunit protein uS9 from Thermoanaerobacter sp. (strain X514).